The following is a 359-amino-acid chain: Ribosomal RNA small subunit methyltransferase H (359 aa).

S-adenosyl-L-methionine is bound by residues 39 to 41 (AGH), Asp58, Phe87, Asp108, and Gln115. Residues 339 to 359 (IQGSASPGRAKNTARIRTRRG) are disordered. A compositionally biased stretch (basic residues) spans 350–359 (NTARIRTRRG).

This sequence belongs to the methyltransferase superfamily. RsmH family.

It is found in the cytoplasm. The catalysed reaction is cytidine(1402) in 16S rRNA + S-adenosyl-L-methionine = N(4)-methylcytidine(1402) in 16S rRNA + S-adenosyl-L-homocysteine + H(+). Specifically methylates the N4 position of cytidine in position 1402 (C1402) of 16S rRNA. In Bifidobacterium longum subsp. infantis (strain ATCC 15697 / DSM 20088 / JCM 1222 / NCTC 11817 / S12), this protein is Ribosomal RNA small subunit methyltransferase H.